Consider the following 193-residue polypeptide: A-type ATP synthase subunit E (193 aa).

Belongs to the V-ATPase E subunit family. As to quaternary structure, has multiple subunits with at least A(3), B(3), C, D, E, F, H, I and proteolipid K(x).

It is found in the cell membrane. Its function is as follows. Component of the A-type ATP synthase that produces ATP from ADP in the presence of a proton gradient across the membrane. In Haloquadratum walsbyi (strain DSM 16790 / HBSQ001), this protein is A-type ATP synthase subunit E.